The sequence spans 916 residues: Isoleucine--tRNA ligase (916 aa).

The short motif at 57–67 (PYANGNLHMGH) is the 'HIGH' region element. Position 554 (E554) interacts with L-isoleucyl-5'-AMP. The 'KMSKS' region motif lies at 595 to 599 (KMSKS). K598 contacts ATP. 4 residues coordinate Zn(2+): C885, C888, C905, and C908.

This sequence belongs to the class-I aminoacyl-tRNA synthetase family. IleS type 1 subfamily. In terms of assembly, monomer. The cofactor is Zn(2+).

The protein resides in the cytoplasm. The catalysed reaction is tRNA(Ile) + L-isoleucine + ATP = L-isoleucyl-tRNA(Ile) + AMP + diphosphate. In terms of biological role, catalyzes the attachment of isoleucine to tRNA(Ile). As IleRS can inadvertently accommodate and process structurally similar amino acids such as valine, to avoid such errors it has two additional distinct tRNA(Ile)-dependent editing activities. One activity is designated as 'pretransfer' editing and involves the hydrolysis of activated Val-AMP. The other activity is designated 'posttransfer' editing and involves deacylation of mischarged Val-tRNA(Ile). In Staphylococcus epidermidis (strain ATCC 35984 / DSM 28319 / BCRC 17069 / CCUG 31568 / BM 3577 / RP62A), this protein is Isoleucine--tRNA ligase (ileS).